The primary structure comprises 119 residues: Large ribosomal subunit protein uL14c (119 aa).

This sequence belongs to the universal ribosomal protein uL14 family. In terms of assembly, part of the 50S ribosomal subunit.

The protein resides in the plastid. The protein localises to the chloroplast. Binds to 23S rRNA. The chain is Large ribosomal subunit protein uL14c from Ostreococcus tauri.